Consider the following 256-residue polypeptide: 5-keto-4-deoxy-D-glucarate aldolase (256 aa).

The active-site Proton acceptor is the His-50. Gln-151 serves as a coordination point for substrate. Mg(2+) is bound at residue Glu-153. Substrate contacts are provided by Ser-178 and Asp-179. Asp-179 is a binding site for Mg(2+).

Belongs to the HpcH/HpaI aldolase family. KDGluc aldolase subfamily. In terms of assembly, homohexamer; trimer of dimers. It depends on Mg(2+) as a cofactor.

It catalyses the reaction 5-dehydro-4-deoxy-D-glucarate = 2-hydroxy-3-oxopropanoate + pyruvate. The catalysed reaction is 2-dehydro-3-deoxy-D-glucarate = 2-hydroxy-3-oxopropanoate + pyruvate. It participates in carbohydrate acid metabolism; galactarate degradation; D-glycerate from galactarate: step 2/3. In terms of biological role, catalyzes the reversible retro-aldol cleavage of both 5-keto-4-deoxy-D-glucarate and 2-keto-3-deoxy-D-glucarate to pyruvate and tartronic semialdehyde. The sequence is that of 5-keto-4-deoxy-D-glucarate aldolase from Escherichia coli (strain ATCC 8739 / DSM 1576 / NBRC 3972 / NCIMB 8545 / WDCM 00012 / Crooks).